A 144-amino-acid polypeptide reads, in one-letter code: D-aminoacyl-tRNA deacylase (144 aa).

The Gly-cisPro motif, important for rejection of L-amino acids signature appears at Gly-136–Pro-137.

This sequence belongs to the DTD family. In terms of assembly, homodimer.

The protein localises to the cytoplasm. It carries out the reaction glycyl-tRNA(Ala) + H2O = tRNA(Ala) + glycine + H(+). The enzyme catalyses a D-aminoacyl-tRNA + H2O = a tRNA + a D-alpha-amino acid + H(+). An aminoacyl-tRNA editing enzyme that deacylates mischarged D-aminoacyl-tRNAs. Also deacylates mischarged glycyl-tRNA(Ala), protecting cells against glycine mischarging by AlaRS. Acts via tRNA-based rather than protein-based catalysis; rejects L-amino acids rather than detecting D-amino acids in the active site. By recycling D-aminoacyl-tRNA to D-amino acids and free tRNA molecules, this enzyme counteracts the toxicity associated with the formation of D-aminoacyl-tRNA entities in vivo and helps enforce protein L-homochirality. The chain is D-aminoacyl-tRNA deacylase from Corynebacterium glutamicum (strain R).